The following is a 154-amino-acid chain: Homeobox protein engrailed (154 aa).

The segment at residues 37–96 is a DNA-binding region (homeobox); that stretch reads EKRPRTAFSASQLQRLKQEFQQSNYLTEQRRRSLAKELTLSESQIKIWFQNKRAKIKKAS. A disordered region spans residues 127–154; sequence KLLNGQNTSGDCSRSDYTSDSDGDSLTH. A compositionally biased stretch (polar residues) spans 129-144; it reads LNGQNTSGDCSRSDYT. Residues 145–154 are compositionally biased toward acidic residues; sequence SDSDGDSLTH.

It belongs to the engrailed homeobox family.

The protein localises to the nucleus. In Tripneustes gratilla (Hawaian sea urchin), this protein is Homeobox protein engrailed (EN).